Reading from the N-terminus, the 354-residue chain is Protein Wnt-11 (354 aa).

The signal sequence occupies residues 1-23 (MTEYRNFLLLFITSLSVIYPCTG). N32, N39, and N89 each carry an N-linked (GlcNAc...) asparagine glycan. 9 cysteine pairs are disulfide-bonded: C129–C137, C139–C156, C209–C223, C211–C218, C283–C314, C299–C309, C329–C344, C331–C341, and C336–C337. S215 carries O-palmitoleoyl serine; by PORCN lipidation. The N-linked (GlcNAc...) asparagine glycan is linked to N300.

It belongs to the Wnt family. Palmitoleoylation is required for efficient binding to frizzled receptors. Depalmitoleoylation leads to Wnt signaling pathway inhibition.

Its subcellular location is the secreted. It localises to the extracellular space. The protein resides in the extracellular matrix. Its function is as follows. Ligand for fzd5, a member of the G-protein coupled frizzled receptor family. Plays a role in early eye development, possibly through wnt non-canonical signaling. Promotes eye formation, at least partially, by antagonizing the Wnt/beta-catenin pathway. In addition, promotes coherence of eye field cells, potentially contributing to the coordinated morphogenetic behaviors of cells in the nascent eye field. This chain is Protein Wnt-11 (wnt11), found in Danio rerio (Zebrafish).